The primary structure comprises 477 residues: UDP-N-acetylmuramate--L-alanine ligase (477 aa).

An ATP-binding site is contributed by 112–118; sequence GTHGKTT.

The protein belongs to the MurCDEF family.

It is found in the cytoplasm. The catalysed reaction is UDP-N-acetyl-alpha-D-muramate + L-alanine + ATP = UDP-N-acetyl-alpha-D-muramoyl-L-alanine + ADP + phosphate + H(+). Its pathway is cell wall biogenesis; peptidoglycan biosynthesis. Cell wall formation. This chain is UDP-N-acetylmuramate--L-alanine ligase, found in Cupriavidus necator (strain ATCC 17699 / DSM 428 / KCTC 22496 / NCIMB 10442 / H16 / Stanier 337) (Ralstonia eutropha).